We begin with the raw amino-acid sequence, 591 residues long: Polyphenol oxidase D, chloroplastic (591 aa).

The transit peptide at 1-83 (MASLCSNSST…ANAIPLAASA (83 aa)) directs the protein to the chloroplast. 2 disulfide bridges follow: Cys94-Cys110 and Cys109-Cys177. The Cu cation site is built by His176, His194, His203, His324, His328, and His366. A cross-link (2'-(S-cysteinyl)-histidine (Cys-His)) is located at residues 180 to 194 (CNGAYRIGGKELQVH).

Belongs to the tyrosinase family. It depends on Cu(2+) as a cofactor.

It localises to the plastid. The protein resides in the chloroplast thylakoid lumen. It catalyses the reaction 2 catechol + O2 = 2 1,2-benzoquinone + 2 H2O. In terms of biological role, catalyzes the oxidation of mono- and o-diphenols to o-diquinones. The chain is Polyphenol oxidase D, chloroplastic from Solanum lycopersicum (Tomato).